The sequence spans 428 residues: GTPase Obg (428 aa).

The region spanning 1–158 (MFVDQVKIYV…RDVILELKVL (158 aa)) is the Obg domain. Positions 159–329 (ADVGLVGFPS…LLFEVANLIE (171 aa)) constitute an OBG-type G domain. GTP-binding positions include 165–172 (GFPSVGKS), 190–194 (FTTIV), 212–215 (DLPG), 282–285 (NKMD), and 310–312 (SAV). Residues serine 172 and threonine 192 each contribute to the Mg(2+) site. The OCT domain maps to 350-428 (KFETEGVKFD…ILEYEFEFID (79 aa)).

It belongs to the TRAFAC class OBG-HflX-like GTPase superfamily. OBG GTPase family. In terms of assembly, monomer. It depends on Mg(2+) as a cofactor.

The protein resides in the cytoplasm. Its function is as follows. An essential GTPase which binds GTP, GDP and possibly (p)ppGpp with moderate affinity, with high nucleotide exchange rates and a fairly low GTP hydrolysis rate. Plays a role in control of the cell cycle, stress response, ribosome biogenesis and in those bacteria that undergo differentiation, in morphogenesis control. This is GTPase Obg from Bacillus thuringiensis (strain Al Hakam).